The chain runs to 190 residues: Holliday junction branch migration complex subunit RuvA (190 aa).

The domain I stretch occupies residues 1-65; that stretch reads MIGTLSGTVE…DGVSQLYGFA (65 aa). The tract at residues 66 to 137 is domain II; sequence NREEQNCMRM…LTPQVQKFEL (72 aa). Residues 137-141 are flexible linker; that stretch reads LNRFA. The segment at 142-190 is domain III; that stretch reads ATTRTDSEAVAALLSLGYERTAALGALQKVGVCDSTEDAVRRALLELSK.

This sequence belongs to the RuvA family. Homotetramer. Forms an RuvA(8)-RuvB(12)-Holliday junction (HJ) complex. HJ DNA is sandwiched between 2 RuvA tetramers; dsDNA enters through RuvA and exits via RuvB. An RuvB hexamer assembles on each DNA strand where it exits the tetramer. Each RuvB hexamer is contacted by two RuvA subunits (via domain III) on 2 adjacent RuvB subunits; this complex drives branch migration. In the full resolvosome a probable DNA-RuvA(4)-RuvB(12)-RuvC(2) complex forms which resolves the HJ.

The protein localises to the cytoplasm. In terms of biological role, the RuvA-RuvB-RuvC complex processes Holliday junction (HJ) DNA during genetic recombination and DNA repair, while the RuvA-RuvB complex plays an important role in the rescue of blocked DNA replication forks via replication fork reversal (RFR). RuvA specifically binds to HJ cruciform DNA, conferring on it an open structure. The RuvB hexamer acts as an ATP-dependent pump, pulling dsDNA into and through the RuvAB complex. HJ branch migration allows RuvC to scan DNA until it finds its consensus sequence, where it cleaves and resolves the cruciform DNA. The polypeptide is Holliday junction branch migration complex subunit RuvA (Anaplasma marginale (strain Florida)).